Consider the following 151-residue polypeptide: MLP-like protein 168 (151 aa).

Belongs to the MLP family.

In Arabidopsis thaliana (Mouse-ear cress), this protein is MLP-like protein 168 (MLP168).